The sequence spans 284 residues: Bifunctional protein FolD 1 (284 aa).

NADP(+) contacts are provided by residues 166 to 168 (GAS) and Ile232.

This sequence belongs to the tetrahydrofolate dehydrogenase/cyclohydrolase family. As to quaternary structure, homodimer.

The catalysed reaction is (6R)-5,10-methylene-5,6,7,8-tetrahydrofolate + NADP(+) = (6R)-5,10-methenyltetrahydrofolate + NADPH. It carries out the reaction (6R)-5,10-methenyltetrahydrofolate + H2O = (6R)-10-formyltetrahydrofolate + H(+). Its pathway is one-carbon metabolism; tetrahydrofolate interconversion. Its function is as follows. Catalyzes the oxidation of 5,10-methylenetetrahydrofolate to 5,10-methenyltetrahydrofolate and then the hydrolysis of 5,10-methenyltetrahydrofolate to 10-formyltetrahydrofolate. This is Bifunctional protein FolD 1 from Ectopseudomonas mendocina (strain ymp) (Pseudomonas mendocina).